Consider the following 546-residue polypeptide: MFS-type transporter GME11371 (546 aa).

7 helical membrane-spanning segments follow: residues 39 to 59 (LTYLFLALILCMLLAVIDLTI), 77 to 96 (IGWYASVFFMTVASSQSSWG), 107 to 127 (MFLLAMGIFELGNVICGAAPT), 137 to 157 (ITGIGAAGVIAGCFTVAAFAV), 167 to 187 (GGLAATYGVGSSIGPIIGGVL), 195 to 215 (WCFYINLPIGGFAAIVLFLFF), and 240 to 260 (FPGFFCCIAAVTCLLLALLWG). The N-linked (GlcNAc...) asparagine glycan is linked to asparagine 267. 7 helical membrane passes run 270 to 290 (DVIGTLVGFFLFTALFAVVEW), 307 to 327 (VVLFGTIGGFFAGGAQFVLVY), 349 to 369 (LPYIIGSTITTIVAGTTISAT), 370 to 390 (GYFTPLIVGGGALWTVSAGLI), 402 to 422 (WIGYQALAGLAVGLCYQPPIL), 433 to 453 (VAATSAILLFFQTMGGAFMVS), and 509 to 529 (ISFAIIIALTGASTVAGIFMP).

This sequence belongs to the major facilitator superfamily.

It is found in the cell membrane. It functions in the pathway secondary metabolite biosynthesis. Functionally, MFS-type transporter; part of the gene cluster that mediates the biosynthesis of dibenzodioxocinones such as pestalotiollide B, a novel class of inhibitors against cholesterol ester transfer protein (CEPT). essential for dibenzodioxocinones biosynthesis and may be involved in the secretion of the cluster products. The sequence is that of MFS-type transporter GME11371 from Pestalotiopsis microspora.